Here is a 305-residue protein sequence, read N- to C-terminus: Ribosomal RNA small subunit methyltransferase H (305 aa).

S-adenosyl-L-methionine-binding positions include 30–32 (GGH), aspartate 49, phenylalanine 74, aspartate 96, and glutamine 103.

This sequence belongs to the methyltransferase superfamily. RsmH family.

It is found in the cytoplasm. It carries out the reaction cytidine(1402) in 16S rRNA + S-adenosyl-L-methionine = N(4)-methylcytidine(1402) in 16S rRNA + S-adenosyl-L-homocysteine + H(+). Specifically methylates the N4 position of cytidine in position 1402 (C1402) of 16S rRNA. This Francisella tularensis subsp. tularensis (strain FSC 198) protein is Ribosomal RNA small subunit methyltransferase H.